A 357-amino-acid chain; its full sequence is MAEFKFTDLVEPVAVDKKTALRITVLGGGSFGTAMANLAARNGCDTMIWIRDAETAEEINKTHINKRYLPDFTLESSLRAVSDLEQAVCDRDIILVAIPSHSFRDVLKQIAPYITAQAVVSLTKGIEAKTFSFMSDIIREELPEVPYGVLSGPNLAKEIMAGMPSGTVIASDSELVRYAVQHALHSALFRVFGSDDVHGVELGGALKNIYAVAMGIGAAYKIGENTKSMILTRALAEMSRFAVKQGANPLTFLGLSGVGDLFATCNSPLSRNYQIGYALGSGKTLEQASKELGQTAEGINTIVQVRGKAQELDVYMPITNALYEVIFEGAPPLNIALSLMKNGHRSDVEFVLPHHEV.

NADPH-binding residues include serine 30, phenylalanine 31, arginine 51, and lysine 124. 2 residues coordinate sn-glycerol 3-phosphate: lysine 124 and glycine 152. Alanine 156 contacts NADPH. Sn-glycerol 3-phosphate-binding residues include lysine 207, aspartate 260, serine 270, arginine 271, and asparagine 272. Catalysis depends on lysine 207, which acts as the Proton acceptor. Residue arginine 271 participates in NADPH binding. Position 297 (glutamate 297) interacts with NADPH.

This sequence belongs to the NAD-dependent glycerol-3-phosphate dehydrogenase family.

It is found in the cytoplasm. It catalyses the reaction sn-glycerol 3-phosphate + NAD(+) = dihydroxyacetone phosphate + NADH + H(+). The enzyme catalyses sn-glycerol 3-phosphate + NADP(+) = dihydroxyacetone phosphate + NADPH + H(+). The protein operates within membrane lipid metabolism; glycerophospholipid metabolism. Its function is as follows. Catalyzes the reduction of the glycolytic intermediate dihydroxyacetone phosphate (DHAP) to sn-glycerol 3-phosphate (G3P), the key precursor for phospholipid synthesis. The protein is Glycerol-3-phosphate dehydrogenase [NAD(P)+] of Acinetobacter baumannii (strain SDF).